The following is a 258-amino-acid chain: Glutamate racemase (258 aa).

Residues 11–12 (DS) and 43–44 (YG) contribute to the substrate site. C74 serves as the catalytic Proton donor/acceptor. 75 to 76 (NT) lines the substrate pocket. Catalysis depends on C187, which acts as the Proton donor/acceptor. 188 to 189 (TH) serves as a coordination point for substrate.

The protein belongs to the aspartate/glutamate racemases family.

The catalysed reaction is L-glutamate = D-glutamate. It participates in cell wall biogenesis; peptidoglycan biosynthesis. Provides the (R)-glutamate required for cell wall biosynthesis. The protein is Glutamate racemase of Bifidobacterium animalis subsp. lactis (strain AD011).